Consider the following 341-residue polypeptide: DNA-directed RNA polymerase subunit alpha (341 aa).

Positions 1 to 237 are alpha N-terminal domain (alpha-NTD); that stretch reads MLSLSKNWNA…EQLQLFISFE (237 aa). Positions 252 to 341 are alpha C-terminal domain (alpha-CTD); that stretch reads FSPYLLKRVD…LSKRYEDSYN (90 aa).

Belongs to the RNA polymerase alpha chain family. Homodimer. The RNAP catalytic core consists of 2 alpha, 1 beta, 1 beta' and 1 omega subunit. When a sigma factor is associated with the core the holoenzyme is formed, which can initiate transcription.

The catalysed reaction is RNA(n) + a ribonucleoside 5'-triphosphate = RNA(n+1) + diphosphate. Functionally, DNA-dependent RNA polymerase catalyzes the transcription of DNA into RNA using the four ribonucleoside triphosphates as substrates. The sequence is that of DNA-directed RNA polymerase subunit alpha from Rickettsia bellii (strain OSU 85-389).